The chain runs to 315 residues: Cobalamin biosynthesis protein CobD (315 aa).

Transmembrane regions (helical) follow at residues 54 to 74, 78 to 98, 152 to 172, 203 to 223, and 295 to 315; these read GLLFVLTVGMTGAVSWFILFL, IAYWLYVAVFVYLGYTTLAMT, ADGVIAPLFYLFIGGPVLALM, IANFIPARLAWFFLVIASFIL, and LLYMASTIAFIMFASIYLLLF.

It belongs to the CobD/CbiB family.

Its subcellular location is the cell membrane. The protein operates within cofactor biosynthesis; adenosylcobalamin biosynthesis. Its function is as follows. Converts cobyric acid to cobinamide by the addition of aminopropanol on the F carboxylic group. The protein is Cobalamin biosynthesis protein CobD of Listeria monocytogenes serovar 1/2a (strain ATCC BAA-679 / EGD-e).